A 124-amino-acid polypeptide reads, in one-letter code: Small ribosomal subunit protein uS12 (124 aa).

D89 bears the 3-methylthioaspartic acid mark.

Belongs to the universal ribosomal protein uS12 family. As to quaternary structure, part of the 30S ribosomal subunit. Contacts proteins S8 and S17. May interact with IF1 in the 30S initiation complex.

Functionally, with S4 and S5 plays an important role in translational accuracy. Interacts with and stabilizes bases of the 16S rRNA that are involved in tRNA selection in the A site and with the mRNA backbone. Located at the interface of the 30S and 50S subunits, it traverses the body of the 30S subunit contacting proteins on the other side and probably holding the rRNA structure together. The combined cluster of proteins S8, S12 and S17 appears to hold together the shoulder and platform of the 30S subunit. The chain is Small ribosomal subunit protein uS12 from Yersinia enterocolitica serotype O:8 / biotype 1B (strain NCTC 13174 / 8081).